The chain runs to 332 residues: 2,3-diketo-L-gulonate reductase (332 aa).

Catalysis depends on H44, which acts as the Proton donor. NAD(+) is bound by residues 168-174 (ITMVDMS), 224-225 (WK), and 304-306 (GHE).

It belongs to the LDH2/MDH2 oxidoreductase family. DlgD subfamily. Homodimer.

It is found in the cytoplasm. It catalyses the reaction 3-dehydro-L-gulonate + NAD(+) = 2,3-dioxo-L-gulonate + NADH + H(+). The enzyme catalyses 3-dehydro-L-gulonate + NADP(+) = 2,3-dioxo-L-gulonate + NADPH + H(+). Functionally, catalyzes the reduction of 2,3-diketo-L-gulonate in the presence of NADH, to form 3-keto-L-gulonate. The chain is 2,3-diketo-L-gulonate reductase from Shigella boydii serotype 4 (strain Sb227).